Reading from the N-terminus, the 223-residue chain is N-terminal Xaa-Pro-Lys N-methyltransferase 1 (223 aa).

M1 is subject to N-acetylmethionine. T2 bears the N-acetylthreonine; in N-terminal Xaa-Pro-Lys N-methyltransferase 1, N-terminally processed mark. S-adenosyl-L-methionine contacts are provided by residues G69, R74, 91–93 (DVT), 119–120 (LQ), and Q135.

Belongs to the methyltransferase superfamily. NTM1 family.

The protein localises to the nucleus. The catalysed reaction is N-terminal L-alanyl-L-prolyl-L-lysyl-[protein] + 3 S-adenosyl-L-methionine = N-terminal N,N,N-trimethyl-L-alanyl-L-prolyl-L-lysyl-[protein] + 3 S-adenosyl-L-homocysteine + 3 H(+). It carries out the reaction N-terminal L-seryl-L-prolyl-L-lysyl-[protein] + 3 S-adenosyl-L-methionine = N-terminal N,N,N-trimethyl-L-seryl-L-prolyl-L-lysyl-[protein] + 3 S-adenosyl-L-homocysteine + 3 H(+). It catalyses the reaction N-terminal L-prolyl-L-prolyl-L-lysyl-[protein] + 2 S-adenosyl-L-methionine = N-terminal N,N-dimethyl-L-prolyl-L-prolyl-L-lysyl-[protein] + 2 S-adenosyl-L-homocysteine + 2 H(+). Functionally, distributive alpha-N-methyltransferase that methylates the N-terminus of target proteins containing the N-terminal motif [Ala/Gly/Pro/Ser]-Pro-Lys when the initiator Met is cleaved. Specifically catalyzes mono-, di- or tri-methylation of the exposed alpha-amino group of the Ala, Gly or Ser residue in the [Ala/Gly/Ser]-Pro-Lys motif and mono- or di-methylation of Pro in the Pro-Pro-Lys motif. Some of the substrates may be primed by NTMT2-mediated monomethylation. Catalyzes the trimethylation of the N-terminal Gly in CENPA (after removal of Met-1). Responsible for the N-terminal methylation of KLHL31, MYL2, MYL3, RB1, RCC1, RPL23A and SET. Required during mitosis for normal bipolar spindle formation and chromosome segregation via its action on RCC1. In Bos taurus (Bovine), this protein is N-terminal Xaa-Pro-Lys N-methyltransferase 1 (NTMT1).